We begin with the raw amino-acid sequence, 257 residues long: uncharacterized protein (257 aa).

A signal peptide spans 1-22 (MIHSRKLRLWLYLVLLAVFIGA). The N-palmitoyl cysteine moiety is linked to residue Cys-23. Residue Cys-23 is the site of S-diacylglycerol cysteine attachment.

This sequence belongs to the staphylococcal tandem lipoprotein family.

Its subcellular location is the cell membrane. This is an uncharacterized protein from Staphylococcus aureus (strain Mu50 / ATCC 700699).